We begin with the raw amino-acid sequence, 878 residues long: Probable receptor-like protein kinase At4g39110 (878 aa).

A signal peptide spans 1 to 43 (MEIRKKPNIFTVLVIDFSSKPSMALLLAILLFLSGPSASAVAA). Topologically, residues 44-440 (AAVGPATGFK…GRTTGMGKHG (397 aa)) are extracellular. Residues Asn170, Asn183, Asn254, Asn317, and Asn382 are each glycosylated (N-linked (GlcNAc...) asparagine). A helical transmembrane segment spans residues 441 to 461 (MVATAGFVMMFGAFIGLGAMV). At 462–878 (YKWKKRPQDW…FTQFANLNGR (417 aa)) the chain is on the cytoplasmic side. Positions 526 to 798 (FEASQIIGVG…GDVLWNLEYA (273 aa)) constitute a Protein kinase domain. Residues 532-540 (IGVGGFGNV) and Lys554 contribute to the ATP site. Asp650 (proton acceptor) is an active-site residue. Residues 808–844 (GKAEETENAKPDVVTPGSVPVSDPSPITPSVTTNEAA) form a disordered region.

The protein belongs to the protein kinase superfamily. Ser/Thr protein kinase family.

It localises to the membrane. In Arabidopsis thaliana (Mouse-ear cress), this protein is Probable receptor-like protein kinase At4g39110.